A 445-amino-acid chain; its full sequence is Adenylyltransferase and sulfurtransferase MOCS3 (445 aa).

Residues 49–70 (LPPSAAAEVEPTGSPSSSSSAA) form a disordered region. Residues G106, D127, 134 to 138 (DNLHR), K151, and 170 to 171 (NN) each bind ATP. Positions 211 and 214 each coordinate Zn(2+). C228 (glycyl thioester intermediate; for adenylyltransferase activity) is an active-site residue. Zn(2+)-binding residues include C286 and C289. The region spanning 342–443 (SGRPHLLVDV…WAKEVDPSFL (102 aa)) is the Rhodanese domain. The active-site Cysteine persulfide intermediate; for sulfurtransferase activity is C403.

In the N-terminal section; belongs to the HesA/MoeB/ThiF family. UBA4 subfamily. Requires Zn(2+) as cofactor.

The protein resides in the cytoplasm. It is found in the cytosol. It carries out the reaction [molybdopterin-synthase sulfur-carrier protein]-C-terminal Gly-Gly + ATP + H(+) = [molybdopterin-synthase sulfur-carrier protein]-C-terminal Gly-Gly-AMP + diphosphate. It catalyses the reaction [molybdopterin-synthase sulfur-carrier protein]-C-terminal Gly-Gly-AMP + S-sulfanyl-L-cysteinyl-[cysteine desulfurase] + AH2 = [molybdopterin-synthase sulfur-carrier protein]-C-terminal-Gly-aminoethanethioate + L-cysteinyl-[cysteine desulfurase] + A + AMP + 2 H(+). It functions in the pathway tRNA modification; 5-methoxycarbonylmethyl-2-thiouridine-tRNA biosynthesis. The protein operates within cofactor biosynthesis; molybdopterin biosynthesis. Plays a central role in 2-thiolation of mcm(5)S(2)U at tRNA wobble positions of cytosolic tRNA(Lys), tRNA(Glu) and tRNA(Gln). Also essential during biosynthesis of the molybdenum cofactor. Acts by mediating the C-terminal thiocarboxylation of sulfur carriers URM1 and MOCS2A. Its N-terminus first activates URM1 and MOCS2A as acyl-adenylates (-COAMP), then the persulfide sulfur on the catalytic cysteine is transferred to URM1 and MOCS2A to form thiocarboxylation (-COSH) of their C-terminus. The reaction probably involves hydrogen sulfide that is generated from the persulfide intermediate and that acts as a nucleophile towards URM1 and MOCS2A. Subsequently, a transient disulfide bond is formed. Does not use thiosulfate as sulfur donor; NFS1 probably acting as a sulfur donor for thiocarboxylation reactions. The chain is Adenylyltransferase and sulfurtransferase MOCS3 from Oryza sativa subsp. japonica (Rice).